We begin with the raw amino-acid sequence, 412 residues long: Alanyl-tRNA editing protein Aarsd1-B (412 aa).

His-108, His-112, Cys-208, and His-212 together coordinate Zn(2+).

Belongs to the class-II aminoacyl-tRNA synthetase family. Alax-L subfamily. Zn(2+) serves as cofactor.

It localises to the cytoplasm. In terms of biological role, functions in trans to edit the amino acid moiety from incorrectly charged tRNA(Ala). The chain is Alanyl-tRNA editing protein Aarsd1-B (aarsd1-b) from Xenopus laevis (African clawed frog).